Consider the following 449-residue polypeptide: Aspartyl protease AED3 (449 aa).

Positions 1 to 23 are cleaved as a signal peptide; sequence MASSSLHFFFFLTLLLPFTFTTA. Residues 104 to 444 form the Peptidase A1 domain; that stretch reads YVVRAKLGTP…DVPNSRIGIA (341 aa). The active site involves D122. An intrachain disulfide couples C132 to C138. N140, N148, N184, N211, and N297 each carry an N-linked (GlcNAc...) asparagine glycan. D328 is a catalytic residue. A glycan (N-linked (GlcNAc...) asparagine) is linked at N353. Residues C366 and C405 are joined by a disulfide bond.

The protein belongs to the peptidase A1 family.

The protein resides in the secreted. It localises to the extracellular space. Its subcellular location is the apoplast. The chain is Aspartyl protease AED3 from Arabidopsis thaliana (Mouse-ear cress).